The primary structure comprises 418 residues: uncharacterized protein (418 aa).

This is an uncharacterized protein from Escherichia coli O157:H7.